The chain runs to 711 residues: DNA topoisomerase 3 (711 aa).

The Toprim domain occupies 2 to 135; the sequence is KSLILAEKPS…IKRLWISSVT (134 aa). Mg(2+) is bound by residues E8 and D104. One can recognise a Topo IA-type catalytic domain in the interval 152–580; sequence FQHLYEAALA…EMKAFTQSIV (429 aa). Residues 186–191 are interaction with DNA; that stretch reads SLGRVQ. Y305 acts as the O-(5'-phospho-DNA)-tyrosine intermediate in catalysis. The disordered stretch occupies residues 672–699; the sequence is KRFKNKSSGKVSKKEMKKYMNNEDSLEN. A compositionally biased stretch (basic and acidic residues) spans 683–692; it reads SKKEMKKYMN.

It belongs to the type IA topoisomerase family. Requires Mg(2+) as cofactor.

The enzyme catalyses ATP-independent breakage of single-stranded DNA, followed by passage and rejoining.. Its function is as follows. Releases the supercoiling and torsional tension of DNA, which is introduced during the DNA replication and transcription, by transiently cleaving and rejoining one strand of the DNA duplex. Introduces a single-strand break via transesterification at a target site in duplex DNA. The scissile phosphodiester is attacked by the catalytic tyrosine of the enzyme, resulting in the formation of a DNA-(5'-phosphotyrosyl)-enzyme intermediate and the expulsion of a 3'-OH DNA strand. The free DNA strand then undergoes passage around the unbroken strand, thus removing DNA supercoils. Finally, in the religation step, the DNA 3'-OH attacks the covalent intermediate to expel the active-site tyrosine and restore the DNA phosphodiester backbone. The polypeptide is DNA topoisomerase 3 (Staphylococcus haemolyticus (strain JCSC1435)).